Here is a 379-residue protein sequence, read N- to C-terminus: Chaperone protein DnaJ (379 aa).

The region spanning 5–69 is the J domain; sequence EFYDRLGVSK…QKRAAYDQYG (65 aa). The CR-type zinc finger occupies 135–217; sequence GAEKEVSYNR…CHGTGHEKKT (83 aa). 8 residues coordinate Zn(2+): Cys148, Cys151, Cys165, Cys168, Cys191, Cys194, Cys205, and Cys208. CXXCXGXG motif repeat units lie at residues 148 to 155, 165 to 172, 191 to 198, and 205 to 212; these read CHTCSGSG, CQKCHGSG, CDVCQGSG, and CPTCHGTG.

This sequence belongs to the DnaJ family. As to quaternary structure, homodimer. The cofactor is Zn(2+).

The protein localises to the cytoplasm. In terms of biological role, participates actively in the response to hyperosmotic and heat shock by preventing the aggregation of stress-denatured proteins and by disaggregating proteins, also in an autonomous, DnaK-independent fashion. Unfolded proteins bind initially to DnaJ; upon interaction with the DnaJ-bound protein, DnaK hydrolyzes its bound ATP, resulting in the formation of a stable complex. GrpE releases ADP from DnaK; ATP binding to DnaK triggers the release of the substrate protein, thus completing the reaction cycle. Several rounds of ATP-dependent interactions between DnaJ, DnaK and GrpE are required for fully efficient folding. Also involved, together with DnaK and GrpE, in the DNA replication of plasmids through activation of initiation proteins. This chain is Chaperone protein DnaJ, found in Streptococcus agalactiae serotype V (strain ATCC BAA-611 / 2603 V/R).